Consider the following 482-residue polypeptide: Pup--protein ligase (482 aa).

Glu-16 contributes to the Mg(2+) binding site. Arg-60 lines the ATP pocket. Tyr-62 serves as a coordination point for Mg(2+). Asp-64 serves as the catalytic Proton acceptor. Residue Glu-70 participates in Mg(2+) binding. Thr-73 and Trp-440 together coordinate ATP.

This sequence belongs to the Pup ligase/Pup deamidase family. Pup-conjugating enzyme subfamily.

The enzyme catalyses ATP + [prokaryotic ubiquitin-like protein]-L-glutamate + [protein]-L-lysine = ADP + phosphate + N(6)-([prokaryotic ubiquitin-like protein]-gamma-L-glutamyl)-[protein]-L-lysine.. It participates in protein degradation; proteasomal Pup-dependent pathway. It functions in the pathway protein modification; protein pupylation. Functionally, catalyzes the covalent attachment of the prokaryotic ubiquitin-like protein modifier Pup to the proteasomal substrate proteins, thereby targeting them for proteasomal degradation. This tagging system is termed pupylation. The ligation reaction involves the side-chain carboxylate of the C-terminal glutamate of Pup and the side-chain amino group of a substrate lysine. This Corynebacterium glutamicum (strain R) protein is Pup--protein ligase.